The sequence spans 214 residues: Coiled-coil domain-containing protein 169 (214 aa).

Positions 30 to 144 (EMLQMSTFEL…IEQEAKAYYK (115 aa)) form a coiled coil. The tract at residues 161 to 214 (VTQEAAKKQQSDPAHATREKPAFKAKYNGLAKRRTMTKRRGGMTKGSHPSNMKH) is disordered. Residues 165–182 (AAKKQQSDPAHATREKPA) show a composition bias toward basic and acidic residues. Basic residues predominate over residues 191 to 202 (AKRRTMTKRRGG).

This sequence belongs to the CCDC169 family.

This chain is Coiled-coil domain-containing protein 169 (ccdc169), found in Xenopus laevis (African clawed frog).